Here is a 92-residue protein sequence, read N- to C-terminus: Small ribosomal subunit protein uS19c (92 aa).

This sequence belongs to the universal ribosomal protein uS19 family.

The protein localises to the plastid. It localises to the chloroplast. Protein S19 forms a complex with S13 that binds strongly to the 16S ribosomal RNA. The chain is Small ribosomal subunit protein uS19c from Calycanthus floridus var. glaucus (Eastern sweetshrub).